The primary structure comprises 214 residues: uncharacterized protein (214 aa).

Residues 10-30 traverse the membrane as a helical segment; that stretch reads LLLAGIGGFMVGGLASWVVSS. A compositionally biased stretch (polar residues) spans 147 to 157; it reads SSQANSQSTQP. Positions 147-166 are disordered; sequence SSQANSQSTQPRDPIPTENF.

The protein localises to the membrane. This is an uncharacterized protein from Schizosaccharomyces pombe (strain 972 / ATCC 24843) (Fission yeast).